The chain runs to 529 residues: Bifunctional purine biosynthesis protein PurH (529 aa).

Residues 1-148 (MQQRRPVRRA…KNHKDVAIVV (148 aa)) form the MGS-like domain.

Belongs to the PurH family.

It carries out the reaction (6R)-10-formyltetrahydrofolate + 5-amino-1-(5-phospho-beta-D-ribosyl)imidazole-4-carboxamide = 5-formamido-1-(5-phospho-D-ribosyl)imidazole-4-carboxamide + (6S)-5,6,7,8-tetrahydrofolate. The catalysed reaction is IMP + H2O = 5-formamido-1-(5-phospho-D-ribosyl)imidazole-4-carboxamide. The protein operates within purine metabolism; IMP biosynthesis via de novo pathway; 5-formamido-1-(5-phospho-D-ribosyl)imidazole-4-carboxamide from 5-amino-1-(5-phospho-D-ribosyl)imidazole-4-carboxamide (10-formyl THF route): step 1/1. Its pathway is purine metabolism; IMP biosynthesis via de novo pathway; IMP from 5-formamido-1-(5-phospho-D-ribosyl)imidazole-4-carboxamide: step 1/1. This Salmonella heidelberg (strain SL476) protein is Bifunctional purine biosynthesis protein PurH.